The following is a 305-amino-acid chain: Nucleotide-binding protein Saro_2904 (305 aa).

15–22 (GLLGAGKT) is an ATP binding site. Position 68-71 (68-71 (DTRT)) interacts with GTP.

Belongs to the RapZ-like family.

In terms of biological role, displays ATPase and GTPase activities. The polypeptide is Nucleotide-binding protein Saro_2904 (Novosphingobium aromaticivorans (strain ATCC 700278 / DSM 12444 / CCUG 56034 / CIP 105152 / NBRC 16084 / F199)).